The chain runs to 359 residues: uncharacterized protein (359 aa).

An N-terminal signal peptide occupies residues 1 to 17 (MLGRSLTSVLIVPTGIG). C18 carries the N-palmitoyl cysteine lipid modification. C18 is lipidated: S-diacylglycerol cysteine.

The protein localises to the cell membrane. This is an uncharacterized protein from Synechococcus sp. (strain ATCC 27144 / PCC 6301 / SAUG 1402/1) (Anacystis nidulans).